A 534-amino-acid polypeptide reads, in one-letter code: Glucans biosynthesis protein D (534 aa).

A signal peptide (tat-type signal) is located at residues 1 to 28 (MYRRDFLKSVTAAWVAFGLPNPLGGAFA).

This sequence belongs to the OpgD/OpgG family. In terms of processing, predicted to be exported by the Tat system. The position of the signal peptide cleavage has not been experimentally proven.

Its subcellular location is the periplasm. It participates in glycan metabolism; osmoregulated periplasmic glucan (OPG) biosynthesis. In terms of biological role, probably involved in the control of the structural glucose backbone of osmoregulated periplasmic glucans (OPGs). The chain is Glucans biosynthesis protein D from Xylella fastidiosa (strain M23).